Reading from the N-terminus, the 379-residue chain is MNQAVIVAAKRTAFGKYGGTLKHLEPEQLLKPLFQHFKEKYPEVISKIDDVVLGNVVGNGGNIARKALLEAGLKDSIPGVTIDRQCGSGLESVQYACRMIQAGAGKVYIAGGVESTSRAPWKIKRPHSVYETALPEFYERASFAPEMSDPSMIQGAENVAKMYGVSRELQDEFAYRSHQLTAENVKNGNISQEILPITVKGELFNTDESLKSHIPKDNFGRFKPVIKGGTVTAANSCMKNDGAVLLLIMEKDMAYELGFDHGLLFKDGVTVGVDSNLPGIGPVPAISNLLKRNQLTIENIEVIEINEAFSAQVVACQQALNISNTQLNIWGGALASGHPYGASGAQLVTRLFYMFDKESMIASMGIGGGLGNAALFTRF.

The active-site Acyl-thioester intermediate is cysteine 86. Histidine 338 (proton acceptor) is an active-site residue.

The protein belongs to the thiolase-like superfamily. Thiolase family.

This is Putative acetyl-CoA C-acetyltransferase VraB (vraB) from Staphylococcus aureus (strain MRSA252).